A 178-amino-acid polypeptide reads, in one-letter code: Oligoribonuclease (178 aa).

In terms of domain architecture, Exonuclease spans 7 to 168 (LIWIDLEMTG…DDIRESIAEL (162 aa)). Residue Y128 is part of the active site.

Belongs to the oligoribonuclease family.

It localises to the cytoplasm. Its function is as follows. 3'-to-5' exoribonuclease specific for small oligoribonucleotides. In Francisella tularensis subsp. holarctica (strain FTNF002-00 / FTA), this protein is Oligoribonuclease.